Here is a 217-residue protein sequence, read N- to C-terminus: Octanoyltransferase (217 aa).

The region spanning 33-208 (SSSQDEIWLV…KLCSLLGIAS (176 aa)) is the BPL/LPL catalytic domain. Substrate is bound by residues 72-79 (RGGQVTYH), 139-141 (SIG), and 152-154 (GLA). The Acyl-thioester intermediate role is filled by C170.

Belongs to the LipB family.

It is found in the cytoplasm. The catalysed reaction is octanoyl-[ACP] + L-lysyl-[protein] = N(6)-octanoyl-L-lysyl-[protein] + holo-[ACP] + H(+). It functions in the pathway protein modification; protein lipoylation via endogenous pathway; protein N(6)-(lipoyl)lysine from octanoyl-[acyl-carrier-protein]: step 1/2. Its function is as follows. Catalyzes the transfer of endogenously produced octanoic acid from octanoyl-acyl-carrier-protein onto the lipoyl domains of lipoate-dependent enzymes. Lipoyl-ACP can also act as a substrate although octanoyl-ACP is likely to be the physiological substrate. The polypeptide is Octanoyltransferase (Pseudoalteromonas atlantica (strain T6c / ATCC BAA-1087)).